Consider the following 299-residue polypeptide: Small ribosomal subunit protein uS2 (299 aa).

Residues 210-299 form a disordered region; the sequence is AEKEEQTQVV…GAATDNSWAS (90 aa). A compositionally biased stretch (polar residues) spans 275 to 285; the sequence is WASTGTATVGP.

The protein belongs to the universal ribosomal protein uS2 family. Component of the small ribosomal subunit. Mature ribosomes consist of a small (40S) and a large (60S) subunit. The 40S subunit contains about 33 different proteins and 1 molecule of RNA (18S). The 60S subunit contains about 49 different proteins and 3 molecules of RNA (28S, 5.8S and 5S). Interacts with ribosomal protein S21.

The protein localises to the cytoplasm. In terms of biological role, required for the assembly and/or stability of the 40S ribosomal subunit. Required for the processing of the 20S rRNA-precursor to mature 18S rRNA in a late step of the maturation of 40S ribosomal subunits. In Ornithodoros parkeri (Soft tick), this protein is Small ribosomal subunit protein uS2.